The following is a 101-amino-acid chain: NAD(P)H-quinone oxidoreductase subunit 4L (101 aa).

Transmembrane regions (helical) follow at residues 3-23 (LRYF…GLIT), 30-50 (VLMS…AFSN), and 64-84 (VFVI…VLAI).

It belongs to the complex I subunit 4L family. In terms of assembly, NDH-1 can be composed of about 15 different subunits; different subcomplexes with different compositions have been identified which probably have different functions.

The protein resides in the cellular thylakoid membrane. The enzyme catalyses a plastoquinone + NADH + (n+1) H(+)(in) = a plastoquinol + NAD(+) + n H(+)(out). It catalyses the reaction a plastoquinone + NADPH + (n+1) H(+)(in) = a plastoquinol + NADP(+) + n H(+)(out). Its function is as follows. NDH-1 shuttles electrons from an unknown electron donor, via FMN and iron-sulfur (Fe-S) centers, to quinones in the respiratory and/or the photosynthetic chain. The immediate electron acceptor for the enzyme in this species is believed to be plastoquinone. Couples the redox reaction to proton translocation, and thus conserves the redox energy in a proton gradient. Cyanobacterial NDH-1 also plays a role in inorganic carbon-concentration. This Nostoc sp. (strain PCC 7120 / SAG 25.82 / UTEX 2576) protein is NAD(P)H-quinone oxidoreductase subunit 4L.